Consider the following 214-residue polypeptide: Adenylate kinase (214 aa).

10 to 15 (GAGKGT) serves as a coordination point for ATP. Residues 30–59 (STGDMFRDHKARGTEIGKQVQAIMDAGGLV) are NMP. Residues T31, R36, 57–59 (GLV), 85–88 (GYPR), and Q92 contribute to the AMP site. Positions 126–163 (GRRSCPRCGAVYHVSQNPPHRAGFCDRDDAALVQREDD) are LID. R127 contacts ATP. Positions 130 and 133 each coordinate Zn(2+). Position 136–137 (136–137 (VY)) interacts with ATP. Residues C150 and D153 each contribute to the Zn(2+) site. Positions 160 and 171 each coordinate AMP. G199 provides a ligand contact to ATP.

This sequence belongs to the adenylate kinase family. Monomer.

It localises to the cytoplasm. It carries out the reaction AMP + ATP = 2 ADP. Its pathway is purine metabolism; AMP biosynthesis via salvage pathway; AMP from ADP: step 1/1. Functionally, catalyzes the reversible transfer of the terminal phosphate group between ATP and AMP. Plays an important role in cellular energy homeostasis and in adenine nucleotide metabolism. The polypeptide is Adenylate kinase (Anaeromyxobacter dehalogenans (strain 2CP-1 / ATCC BAA-258)).